The chain runs to 293 residues: Ribosomal protein L11 methyltransferase (293 aa).

4 residues coordinate S-adenosyl-L-methionine: threonine 145, glycine 166, aspartate 188, and asparagine 230.

This sequence belongs to the methyltransferase superfamily. PrmA family.

It localises to the cytoplasm. The catalysed reaction is L-lysyl-[protein] + 3 S-adenosyl-L-methionine = N(6),N(6),N(6)-trimethyl-L-lysyl-[protein] + 3 S-adenosyl-L-homocysteine + 3 H(+). Functionally, methylates ribosomal protein L11. The sequence is that of Ribosomal protein L11 methyltransferase from Escherichia coli O81 (strain ED1a).